The chain runs to 304 residues: Aspartate carbamoyltransferase catalytic subunit (304 aa).

Residues R54 and T55 each coordinate carbamoyl phosphate. L-aspartate is bound at residue K83. Positions 104, 132, and 135 each coordinate carbamoyl phosphate. L-aspartate contacts are provided by R165 and R226. Carbamoyl phosphate is bound by residues L265 and P266.

It belongs to the aspartate/ornithine carbamoyltransferase superfamily. ATCase family. In terms of assembly, heterooligomer of catalytic and regulatory chains.

The enzyme catalyses carbamoyl phosphate + L-aspartate = N-carbamoyl-L-aspartate + phosphate + H(+). It participates in pyrimidine metabolism; UMP biosynthesis via de novo pathway; (S)-dihydroorotate from bicarbonate: step 2/3. In terms of biological role, catalyzes the condensation of carbamoyl phosphate and aspartate to form carbamoyl aspartate and inorganic phosphate, the committed step in the de novo pyrimidine nucleotide biosynthesis pathway. The sequence is that of Aspartate carbamoyltransferase catalytic subunit from Pyrobaculum neutrophilum (strain DSM 2338 / JCM 9278 / NBRC 100436 / V24Sta) (Thermoproteus neutrophilus).